Consider the following 241-residue polypeptide: Probable transcriptional regulatory protein AZOSEA20720 (241 aa).

The interval 1 to 21 is disordered; sequence MAGHSKWANIQHRKGRQDAKR.

This sequence belongs to the TACO1 family.

Its subcellular location is the cytoplasm. In Aromatoleum aromaticum (strain DSM 19018 / LMG 30748 / EbN1) (Azoarcus sp. (strain EbN1)), this protein is Probable transcriptional regulatory protein AZOSEA20720.